The following is a 310-amino-acid chain: Fe-S cluster assembly protein dre2 (310 aa).

Disordered stretches follow at residues 1-30 and 165-184; these read MAPS…GKRT and APAP…DDND. The segment at 24–154 is N-terminal SAM-like domain; the sequence is ADSGKRTLLL…KMDVGNGAAV (131 aa). Residues 155 to 202 are linker; the sequence is PLRLGRKKKAAPAPAPVVQPPPIISSDDNDLNDDELIDEDTLLSADDL. Over residues 167-177 the composition is skewed to pro residues; it reads APAPVVQPPPI. 4 residues coordinate [2Fe-2S] cluster: cysteine 212, cysteine 223, cysteine 226, and cysteine 228. The fe-S binding site A stretch occupies residues 212 to 228; it reads CQPKAGKRRRACKDCTC. Residues cysteine 273, cysteine 276, cysteine 284, and cysteine 287 each coordinate [4Fe-4S] cluster. 2 short sequence motifs (cx2C motif) span residues 273 to 276 and 284 to 287; these read CGNC and CDGC. The fe-S binding site B stretch occupies residues 273–287; that stretch reads CGNCALGDAFRCDGC.

This sequence belongs to the anamorsin family. In terms of assembly, monomer. Interacts with tah18. Interacts with mia40. [2Fe-2S] cluster is required as a cofactor. Requires [4Fe-4S] cluster as cofactor.

It is found in the cytoplasm. Its subcellular location is the mitochondrion intermembrane space. Component of the cytosolic iron-sulfur (Fe-S) protein assembly (CIA) machinery required for the maturation of extramitochondrial Fe-S proteins. Part of an electron transfer chain functioning in an early step of cytosolic Fe-S biogenesis, facilitating the de novo assembly of a [4Fe-4S] cluster on the scaffold complex cfd1-nbp35. Electrons are transferred to dre2 from NADPH via the FAD- and FMN-containing protein tah18. Tah18-dre2 are also required for the assembly of the diferric tyrosyl radical cofactor of ribonucleotide reductase (RNR), probably by providing electrons for reduction during radical cofactor maturation in the catalytic small subunit rnr2. This Emericella nidulans (strain FGSC A4 / ATCC 38163 / CBS 112.46 / NRRL 194 / M139) (Aspergillus nidulans) protein is Fe-S cluster assembly protein dre2.